A 142-amino-acid chain; its full sequence is Hemoglobin subunit alpha (142 aa).

A Globin domain is found at Val-2–Arg-142. At Ser-4 the chain carries Phosphoserine. Lys-8 and Lys-12 each carry N6-succinyllysine. Lys-17 is modified (N6-acetyllysine; alternate). Lys-17 bears the N6-succinyllysine; alternate mark. Tyr-25 carries the phosphotyrosine modification. Ser-36 carries the post-translational modification Phosphoserine. At Lys-41 the chain carries N6-succinyllysine. Ser-50 is modified (phosphoserine). His-59 provides a ligand contact to O2. His-88 is a heme b binding site. Ser-103 carries the post-translational modification Phosphoserine. The residue at position 109 (Thr-109) is a Phosphothreonine. Residues Ser-125 and Ser-132 each carry the phosphoserine modification. Thr-135 and Thr-138 each carry phosphothreonine. At Ser-139 the chain carries Phosphoserine.

This sequence belongs to the globin family. In terms of assembly, heterotetramer of two alpha chains and two beta chains. Red blood cells.

Involved in oxygen transport from the lung to the various peripheral tissues. In terms of biological role, hemopressin acts as an antagonist peptide of the cannabinoid receptor CNR1. Hemopressin-binding efficiently blocks cannabinoid receptor CNR1 and subsequent signaling. The polypeptide is Hemoglobin subunit alpha (HBA) (Chlorocebus aethiops (Green monkey)).